The following is a 1116-amino-acid chain: Electrogenic sodium bicarbonate cotransporter 4 (1116 aa).

A compositionally biased stretch (basic and acidic residues) spans 1–14; it reads MKVDEEKAGVKKLD. Disordered stretches follow at residues 1 to 92, 222 to 257, and 431 to 467; these read MKVD…TRSP, PIHRSLADIGKSVSTTNRSSARSSSAGPTLHRSTED, and PGQMNGSVGGGGASAGGGGSGGGAGGSGAGGVGSGDE. Topologically, residues 1-515 are cytoplasmic; it reads MKVDEEKAGV…YDGFHLQSIS (515 aa). Positions 233 to 247 are enriched in low complexity; that stretch reads SVSTTNRSSARSSSA. The span at 437 to 464 shows a compositional bias: gly residues; sequence SVGGGGASAGGGGSGGGAGGSGAGGVGS. A helical transmembrane segment spans residues 516–536; it reads AVLFIYLGCITNAITFGGLLG. Over 537-558 the chain is Extracellular; the sequence is DATDNYQGVMESFLGTAMAGSL. A helical membrane pass occupies residues 559 to 579; the sequence is FCLFSGQPLIILSSTGPILIF. Over 580–600 the chain is Cytoplasmic; it reads EKLLFDFSKANGLDYMEFRLW. The chain crosses the membrane as a helical span at residues 601 to 621; it reads IGLHSAIQCLILVATDASFII. At 622–631 the chain is on the extracellular side; that stretch reads KYITRFTEEG. A helical transmembrane segment spans residues 632–652; the sequence is FSTLISFIFIYDAIKKMIGAF. Residues 653-730 are Cytoplasmic-facing; sequence KYYPINTDFK…GGRLLGSSCQ (78 aa). A helical transmembrane segment spans residues 731-751; it reads FVPDLALMSFILFFGTYSMTL. At 752–768 the chain is on the extracellular side; the sequence is TLKKFKFSRYFPTKVRT. A helical membrane pass occupies residues 769–789; sequence LVADFSIVFSILLFCGIDACF. At 790–819 the chain is on the cytoplasmic side; that stretch reads GLQTPKLHVPSVIKPTRPDRGWFVAPFGKN. A helical membrane pass occupies residues 820–840; the sequence is PWWVYPASILPALLVTILIFM. Residues 841-865 lie on the Extracellular side of the membrane; it reads DQQITAVIVNRKENKLRKAAGYHLD. The helical transmembrane segment at 866 to 886 threads the bilayer; it reads LFWVGILMALCSFTGLPWYVA. Over 887–922 the chain is Cytoplasmic; the sequence is ATVISIAHIDSLKMETETSAPGEQPQFLGVREQRVT. A helical membrane pass occupies residues 923–943; sequence GVMVFILTGISVFLAPILKYI. The Extracellular segment spans residues 944-945; it reads PM. Residues 946–966 form a helical membrane-spanning segment; sequence PVLYGVFLYMGVASLNGIQFW. Over 967 to 987 the chain is Cytoplasmic; sequence ERCKLFLMPAKHQPDHAFLRH. A run of 2 helical transmembrane segments spans residues 988 to 1008 and 1009 to 1029; these read VPLRRIHLFTLVQILCLALLW and ILKSTMAAIIFPVMILGLIIV. The Cytoplasmic segment spans residues 1030–1116; the sequence is RRLLDLIFSQ…KRSSSWSYSL (87 aa).

Belongs to the anion exchanger (TC 2.A.31) family.

The protein resides in the apical cell membrane. The protein localises to the basolateral cell membrane. It catalyses the reaction 2 hydrogencarbonate(out) + Na(+)(out) = 2 hydrogencarbonate(in) + Na(+)(in). It carries out the reaction 3 hydrogencarbonate(out) + Na(+)(out) = 3 hydrogencarbonate(in) + Na(+)(in). Mediates sodium- and bicarbonate-dependent electrogenic sodium bicarbonate cotransport, with a Na(+):HCO3(-) stoichiometry varying from 1:2 to 1:3. The polypeptide is Electrogenic sodium bicarbonate cotransporter 4 (Slc4a5) (Mus musculus (Mouse)).